Consider the following 1463-residue polypeptide: DNA polymerase III PolC-type (1463 aa).

In terms of domain architecture, Exonuclease spans 425–581 (YVVFDVETTG…YDAEATGRLL (157 aa)).

Belongs to the DNA polymerase type-C family. PolC subfamily.

Its subcellular location is the cytoplasm. It catalyses the reaction DNA(n) + a 2'-deoxyribonucleoside 5'-triphosphate = DNA(n+1) + diphosphate. In terms of biological role, required for replicative DNA synthesis. This DNA polymerase also exhibits 3' to 5' exonuclease activity. This is DNA polymerase III PolC-type from Streptococcus pneumoniae serotype 4 (strain ATCC BAA-334 / TIGR4).